A 457-amino-acid chain; its full sequence is Bifunctional protein GlmU (457 aa).

The pyrophosphorylase stretch occupies residues Met-1–Pro-236. UDP-N-acetyl-alpha-D-glucosamine contacts are provided by residues Leu-14–Gly-17, Lys-28, Gln-79, and Gly-84–Thr-85. Asp-110 serves as a coordination point for Mg(2+). 4 residues coordinate UDP-N-acetyl-alpha-D-glucosamine: Gly-145, Glu-159, Asn-176, and Asn-234. Mg(2+) is bound at residue Asn-234. The interval Lys-237 to Ser-257 is linker. The interval Gly-258–Lys-457 is N-acetyltransferase. UDP-N-acetyl-alpha-D-glucosamine contacts are provided by Arg-340 and Lys-358. The active-site Proton acceptor is the His-370. UDP-N-acetyl-alpha-D-glucosamine is bound by residues Tyr-373 and Asn-384. Acetyl-CoA-binding positions include Ala-387, Asn-393–Tyr-394, Ser-412, Ala-430, and Arg-447.

The protein in the N-terminal section; belongs to the N-acetylglucosamine-1-phosphate uridyltransferase family. It in the C-terminal section; belongs to the transferase hexapeptide repeat family. As to quaternary structure, homotrimer. Requires Mg(2+) as cofactor.

It localises to the cytoplasm. The enzyme catalyses alpha-D-glucosamine 1-phosphate + acetyl-CoA = N-acetyl-alpha-D-glucosamine 1-phosphate + CoA + H(+). It catalyses the reaction N-acetyl-alpha-D-glucosamine 1-phosphate + UTP + H(+) = UDP-N-acetyl-alpha-D-glucosamine + diphosphate. It functions in the pathway nucleotide-sugar biosynthesis; UDP-N-acetyl-alpha-D-glucosamine biosynthesis; N-acetyl-alpha-D-glucosamine 1-phosphate from alpha-D-glucosamine 6-phosphate (route II): step 2/2. The protein operates within nucleotide-sugar biosynthesis; UDP-N-acetyl-alpha-D-glucosamine biosynthesis; UDP-N-acetyl-alpha-D-glucosamine from N-acetyl-alpha-D-glucosamine 1-phosphate: step 1/1. Its pathway is bacterial outer membrane biogenesis; LPS lipid A biosynthesis. Functionally, catalyzes the last two sequential reactions in the de novo biosynthetic pathway for UDP-N-acetylglucosamine (UDP-GlcNAc). The C-terminal domain catalyzes the transfer of acetyl group from acetyl coenzyme A to glucosamine-1-phosphate (GlcN-1-P) to produce N-acetylglucosamine-1-phosphate (GlcNAc-1-P), which is converted into UDP-GlcNAc by the transfer of uridine 5-monophosphate (from uridine 5-triphosphate), a reaction catalyzed by the N-terminal domain. This Lawsonia intracellularis (strain PHE/MN1-00) protein is Bifunctional protein GlmU.